We begin with the raw amino-acid sequence, 496 residues long: Genome polyprotein (496 aa).

The Extracellular segment spans residues 1–447 (SRCTHLENRD…HTVLGGAFNS (447 aa)). Disulfide bonds link Cys-3/Cys-30, Cys-60/Cys-116, Cys-60/Cys-121, Cys-74/Cys-105, Cys-92/Cys-116, and Cys-92/Cys-121. Residues 98 to 111 (DRGWGNHCGLFGKG) form a fusion peptide region. The N-linked (GlcNAc...) asparagine; by host glycan is linked to Asn-154. 2 cysteine pairs are disulfide-bonded: Cys-186–Cys-290 and Cys-307–Cys-338. A helical transmembrane segment spans residues 448 to 468 (IFGGVGFLPKLLMGVALAWLG). Topologically, residues 469–479 (LNTRNPTMSIS) are cytoplasmic. A helical transmembrane segment spans residues 480 to 496 (FLLTGGLVLAMTLGVGA).

Homodimer; in the endoplasmic reticulum and Golgi. In terms of processing, N-glycosylated.

It localises to the virion membrane. Its subcellular location is the host endoplasmic reticulum membrane. Binds to host cell surface receptor and mediates fusion between viral and cellular membranes. Envelope protein is synthesized in the endoplasmic reticulum in the form of heterodimer with protein prM. They play a role in virion budding in the ER, and the newly formed immature particle is covered with 60 spikes composed of heterodimer between precursor prM and envelope protein E. The virion is transported to the Golgi apparatus where the low pH causes dissociation of PrM-E heterodimers and formation of E homodimers. prM-E cleavage is ineficient, and many virions are only partially matured. These uncleaved prM would play a role in immune evasion. In Louping ill virus (strain SB 526) (Li), this protein is Genome polyprotein.